The following is a 143-amino-acid chain: Anti-sigma F factor (143 aa).

This sequence belongs to the anti-sigma-factor family.

It catalyses the reaction L-seryl-[protein] + ATP = O-phospho-L-seryl-[protein] + ADP + H(+). The catalysed reaction is L-threonyl-[protein] + ATP = O-phospho-L-threonyl-[protein] + ADP + H(+). Binds to sigma F and blocks its ability to form an RNA polymerase holoenzyme (E-sigma F). Phosphorylates SpoIIAA on a serine residue. This phosphorylation may enable SpoIIAA to act as an anti-anti-sigma factor that counteracts SpoIIAB and thus releases sigma F from inhibition. In Caldanaerobacter subterraneus subsp. tengcongensis (strain DSM 15242 / JCM 11007 / NBRC 100824 / MB4) (Thermoanaerobacter tengcongensis), this protein is Anti-sigma F factor.